The following is a 108-amino-acid chain: Phosphoribosyl-ATP pyrophosphatase (108 aa).

The protein belongs to the PRA-PH family.

It localises to the cytoplasm. The catalysed reaction is 1-(5-phospho-beta-D-ribosyl)-ATP + H2O = 1-(5-phospho-beta-D-ribosyl)-5'-AMP + diphosphate + H(+). Its pathway is amino-acid biosynthesis; L-histidine biosynthesis; L-histidine from 5-phospho-alpha-D-ribose 1-diphosphate: step 2/9. This Pelobacter propionicus (strain DSM 2379 / NBRC 103807 / OttBd1) protein is Phosphoribosyl-ATP pyrophosphatase.